A 130-amino-acid polypeptide reads, in one-letter code: MRTKPQRPRATRSYLGQPCGSPRRTEETGETWERVAFSLFTHTCTQPLAGTVDTHLPSLLLPVILHPLGAASAGRALEPKADPHTCPYGRKESRGEKVRRGRAKSNSGPNVPGPPAAPQSLKSGSPSTRR.

Residues 1-10 show a composition bias toward basic residues; that stretch reads MRTKPQRPRA. 2 disordered regions span residues 1–29 and 74–130; these read MRTK…EETG and GRAL…STRR. The segment at 16-22 is mediates interaction with SRSF3; sequence GQPCGSP. The span at 77–98 shows a compositional bias: basic and acidic residues; it reads LEPKADPHTCPYGRKESRGEKV. Over residues 120–130 the composition is skewed to polar residues; sequence SLKSGSPSTRR.

In terms of assembly, interacts with SRSF3; increases SRSF3 binding to specific exons.

The protein localises to the nucleus. Functionally, interacts with the splicing factor SRSF3 and increases its binding to specific exons within pre-mRNA, thereby regulating exon-inclusion during alternative splicing. Does not directly bind pre-mRNA and could regulate a wider range of splicing factors through a similar mechanism. The chain is Splicing regulatory small protein from Homo sapiens (Human).